Consider the following 839-residue polypeptide: uncharacterized protein (839 aa).

3 disordered regions span residues 504–611 (TVSP…NVVN), 627–646 (KNNN…DNHC), and 682–839 (NHNY…SLGS). The span at 509-611 (GNNNVTGDVD…EGSNNCNVVN (103 aa)) shows a compositional bias: low complexity. The span at 636–646 (NEYKNSNDNHC) shows a compositional bias: basic and acidic residues. 2 stretches are compositionally biased toward low complexity: residues 689–704 (NGNN…NNNN) and 713–753 (QQQP…NNNK). Positions 726 to 764 (QQSQQQPQLQQKKQQIQEEQQNLNNNNKSIEDDEEAFNS) form a coiled coil. A compositionally biased stretch (basic and acidic residues) spans 765–776 (DDEHDHEDDSIR). Over residues 809 to 823 (EDNDDDSDISDSDSD) the composition is skewed to acidic residues.

This is an uncharacterized protein from Dictyostelium discoideum (Social amoeba).